The primary structure comprises 611 residues: Methionine--tRNA ligase (611 aa).

The 'HIGH' region signature appears at 12 to 22 (PYANGPRHIGH). Zn(2+)-binding residues include cysteine 144, cysteine 147, cysteine 157, and cysteine 160. The short motif at 348–352 (KFSSS) is the 'KMSKS' region element. An ATP-binding site is contributed by serine 351.

Belongs to the class-I aminoacyl-tRNA synthetase family. MetG type 1 subfamily. In terms of assembly, monomer. Zn(2+) serves as cofactor.

It localises to the cytoplasm. It catalyses the reaction tRNA(Met) + L-methionine + ATP = L-methionyl-tRNA(Met) + AMP + diphosphate. In terms of biological role, is required not only for elongation of protein synthesis but also for the initiation of all mRNA translation through initiator tRNA(fMet) aminoacylation. The protein is Methionine--tRNA ligase of Corynebacterium urealyticum (strain ATCC 43042 / DSM 7109).